We begin with the raw amino-acid sequence, 894 residues long: Protein translocase subunit SecA (894 aa).

ATP contacts are provided by residues glutamine 87, 105–109 (GEGKT), and aspartate 512. A disordered region spans residues 836 to 870 (EVEQAERERQAHAEQESSHYHAEGEGQDFSDLHIG). Cysteine 875, cysteine 877, cysteine 886, and histidine 887 together coordinate Zn(2+).

It belongs to the SecA family. In terms of assembly, monomer and homodimer. Part of the essential Sec protein translocation apparatus which comprises SecA, SecYEG and auxiliary proteins SecDF-YajC and YidC. Requires Zn(2+) as cofactor.

It is found in the cell inner membrane. The protein localises to the cytoplasm. The enzyme catalyses ATP + H2O + cellular proteinSide 1 = ADP + phosphate + cellular proteinSide 2.. In terms of biological role, part of the Sec protein translocase complex. Interacts with the SecYEG preprotein conducting channel. Has a central role in coupling the hydrolysis of ATP to the transfer of proteins into and across the cell membrane, serving both as a receptor for the preprotein-SecB complex and as an ATP-driven molecular motor driving the stepwise translocation of polypeptide chains across the membrane. This Glaesserella parasuis serovar 5 (strain SH0165) (Haemophilus parasuis) protein is Protein translocase subunit SecA.